The following is a 338-amino-acid chain: Glyceraldehyde-3-phosphate dehydrogenase (338 aa).

Residues 13–14 (RI), Asp-35, and Arg-80 each bind NAD(+). Residues 151 to 153 (SCT), Thr-182, 211 to 212 (TG), and Arg-234 contribute to the D-glyceraldehyde 3-phosphate site. The active-site Nucleophile is the Cys-152. Asn-316 is a binding site for NAD(+).

It belongs to the glyceraldehyde-3-phosphate dehydrogenase family. As to quaternary structure, homotetramer.

It is found in the cytoplasm. The catalysed reaction is D-glyceraldehyde 3-phosphate + phosphate + NAD(+) = (2R)-3-phospho-glyceroyl phosphate + NADH + H(+). The protein operates within carbohydrate degradation; glycolysis; pyruvate from D-glyceraldehyde 3-phosphate: step 1/5. The chain is Glyceraldehyde-3-phosphate dehydrogenase (GPD) from Sclerotinia sclerotiorum (White mold).